Reading from the N-terminus, the 129-residue chain is Lysozyme C (129 aa).

Residues 1–129 form the C-type lysozyme domain; it reads KIYTRCELAA…VSKWIKDCKL (129 aa). Cystine bridges form between Cys6-Cys127, Cys30-Cys115, Cys64-Cys80, and Cys76-Cys94. Catalysis depends on residues Glu35 and Asp52.

It belongs to the glycosyl hydrolase 22 family. As to quaternary structure, monomer.

The protein localises to the secreted. It carries out the reaction Hydrolysis of (1-&gt;4)-beta-linkages between N-acetylmuramic acid and N-acetyl-D-glucosamine residues in a peptidoglycan and between N-acetyl-D-glucosamine residues in chitodextrins.. In terms of biological role, lysozymes have primarily a bacteriolytic function; those in tissues and body fluids are associated with the monocyte-macrophage system and enhance the activity of immunoagents. The polypeptide is Lysozyme C (LYZ) (Crax fasciolata (Bare-faced curassow)).